Reading from the N-terminus, the 174-residue chain is NAD(P)H-quinone oxidoreductase subunit J (174 aa).

This sequence belongs to the complex I 30 kDa subunit family. In terms of assembly, NDH-1 can be composed of about 15 different subunits; different subcomplexes with different compositions have been identified which probably have different functions.

It localises to the cellular thylakoid membrane. The enzyme catalyses a plastoquinone + NADH + (n+1) H(+)(in) = a plastoquinol + NAD(+) + n H(+)(out). It catalyses the reaction a plastoquinone + NADPH + (n+1) H(+)(in) = a plastoquinol + NADP(+) + n H(+)(out). Its function is as follows. NDH-1 shuttles electrons from an unknown electron donor, via FMN and iron-sulfur (Fe-S) centers, to quinones in the respiratory and/or the photosynthetic chain. The immediate electron acceptor for the enzyme in this species is believed to be plastoquinone. Couples the redox reaction to proton translocation, and thus conserves the redox energy in a proton gradient. Cyanobacterial NDH-1 also plays a role in inorganic carbon-concentration. The protein is NAD(P)H-quinone oxidoreductase subunit J of Picosynechococcus sp. (strain ATCC 27264 / PCC 7002 / PR-6) (Agmenellum quadruplicatum).